We begin with the raw amino-acid sequence, 126 residues long: S-adenosylmethionine decarboxylase proenzyme (126 aa).

The active-site Schiff-base intermediate with substrate; via pyruvic acid is the Ser-63. Ser-63 carries the post-translational modification Pyruvic acid (Ser); by autocatalysis. His-68 acts as the Proton acceptor; for processing activity in catalysis. Cys-83 (proton donor; for catalytic activity) is an active-site residue.

This sequence belongs to the prokaryotic AdoMetDC family. Type 1 subfamily. As to quaternary structure, heterotetramer of two alpha and two beta chains arranged as a dimer of alpha/beta heterodimers. Requires pyruvate as cofactor. Post-translationally, is synthesized initially as an inactive proenzyme. Formation of the active enzyme involves a self-maturation process in which the active site pyruvoyl group is generated from an internal serine residue via an autocatalytic post-translational modification. Two non-identical subunits are generated from the proenzyme in this reaction, and the pyruvate is formed at the N-terminus of the alpha chain, which is derived from the carboxyl end of the proenzyme. The post-translation cleavage follows an unusual pathway, termed non-hydrolytic serinolysis, in which the side chain hydroxyl group of the serine supplies its oxygen atom to form the C-terminus of the beta chain, while the remainder of the serine residue undergoes an oxidative deamination to produce ammonia and the pyruvoyl group blocking the N-terminus of the alpha chain.

The enzyme catalyses S-adenosyl-L-methionine + H(+) = S-adenosyl 3-(methylsulfanyl)propylamine + CO2. It functions in the pathway amine and polyamine biosynthesis; S-adenosylmethioninamine biosynthesis; S-adenosylmethioninamine from S-adenosyl-L-methionine: step 1/1. Functionally, catalyzes the decarboxylation of S-adenosylmethionine to S-adenosylmethioninamine (dcAdoMet), the propylamine donor required for the synthesis of the polyamines spermine and spermidine from the diamine putrescine. The protein is S-adenosylmethionine decarboxylase proenzyme of Bacillus velezensis (strain DSM 23117 / BGSC 10A6 / LMG 26770 / FZB42) (Bacillus amyloliquefaciens subsp. plantarum).